A 365-amino-acid chain; its full sequence is Endophilin-B1 (365 aa).

Methionine 1 carries the post-translational modification N-acetylmethionine. A membrane-binding amphipathic helix region spans residues 1–30 (MNIMDFNVKKLAADAGTFLSRAVQFTEEKL). Residues 1–37 (MNIMDFNVKKLAADAGTFLSRAVQFTEEKLGQAEKTE) are required for membrane binding. The BAR domain occupies 27-261 (EEKLGQAEKT…LGSFPSNYHS (235 aa)). Threonine 145 carries the post-translational modification Phosphothreonine; by CDK5. The stretch at 155–195 (YKTIAKERKLLQNKRLDLDAAKTRLKKAKAAETRASSEQEL) forms a coiled coil. The SH3 domain maps to 305 to 365 (GGSRRARVLY…VPITYLELLN (61 aa)).

This sequence belongs to the endophilin family. As to quaternary structure, homodimer, and heterodimer with SH3GLB2. Binds BAX; induction of apoptosis augments BAX binding. Binds DNM1, HTT, AMPH, BIN1 and ARFGAP1. Interacts with UVRAG; UVRAG bridges the interaction to BECN1 indicative for an association with the PI3K complex II (PI3KC3-C2). Post-translationally, phosphorylated at Thr-145 by CDK5; this phosphorylation is required for autophagy induction in starved neurons and facilitates homodimerization.

The protein resides in the cytoplasm. It is found in the golgi apparatus membrane. It localises to the mitochondrion outer membrane. Its subcellular location is the cytoplasmic vesicle. The protein localises to the autophagosome membrane. The protein resides in the midbody. May be required for normal outer mitochondrial membrane dynamics. Required for coatomer-mediated retrograde transport in certain cells. May recruit other proteins to membranes with high curvature. May promote membrane fusion. Involved in activation of caspase-dependent apoptosis by promoting BAX/BAK1 activation. Involved in caspase-independent apoptosis during nutrition starvation and involved in the regulation of autophagy. Activates lipid kinase activity of PIK3C3 during autophagy probably by associating with the PI3K complex II (PI3KC3-C2). Associated with PI3KC3-C2 during autophagy may regulate the trafficking of ATG9A from the Golgi complex to the peripheral cytoplasm for the formation of autophagosomes by inducing Golgi membrane tubulation and fragmentation. Involved in regulation of degradative endocytic trafficking and cytokinesis, probably in the context of PI3KC3-C2. This Bos taurus (Bovine) protein is Endophilin-B1 (SH3GLB1).